The chain runs to 30 residues: Pyrrole-2-carboxylate oxygenase (30 aa).

In terms of assembly, homotrimer. FAD serves as cofactor.

It carries out the reaction pyrrole-2-carboxylate + NADH + O2 + H(+) = 5-hydroxypyrrole-2-carboxylate + NAD(+) + H2O. Monooxygenase that initiates the degradation of pyrrole-2-carboxylate, which allows Arthrobacter sp. strain Py1 to grow on pyrrole-2-carboxylate as sole carbon, nitrogen, and energy source. To a lesser extent, can also use pyrrole, pyrrole-2-aldehyde, and indole-2-carboxylate as substrate. The polypeptide is Pyrrole-2-carboxylate oxygenase (Arthrobacter sp. (strain Py1)).